The chain runs to 156 residues: Small ribosomal subunit protein uS7 (156 aa).

Belongs to the universal ribosomal protein uS7 family. As to quaternary structure, part of the 30S ribosomal subunit. Contacts proteins S9 and S11.

One of the primary rRNA binding proteins, it binds directly to 16S rRNA where it nucleates assembly of the head domain of the 30S subunit. Is located at the subunit interface close to the decoding center, probably blocks exit of the E-site tRNA. This chain is Small ribosomal subunit protein uS7, found in Enterobacter sp. (strain 638).